Here is a 302-residue protein sequence, read N- to C-terminus: m7GpppN-mRNA hydrolase NUDT17 (302 aa).

The Nudix hydrolase domain occupies 89–237 (GRGVDLGVAV…DGTETPKHLP (149 aa)). A Nudix box motif is present at residues 128 to 149 (GHVEPDEELLDGGLRELWEESG). Mg(2+) contacts are provided by Glu-143 and Glu-147.

It belongs to the Nudix hydrolase family. The cofactor is Mg(2+). Mn(2+) is required as a cofactor.

It catalyses the reaction a 5'-end (N(7)-methyl 5'-triphosphoguanosine)-ribonucleoside in mRNA + H2O = N(7)-methyl-GDP + a 5'-end phospho-ribonucleoside in mRNA + 2 H(+). Functionally, acts as a decapping enzyme capable of hydrolyzing monomethylated capped RNAs (in vitro). Hydrolyzes monomethylated capped RNA after alpha and beta phosphates to form N(7)-methyl-GDP. Shows low activity towards unmethylated capped RNA. This chain is m7GpppN-mRNA hydrolase NUDT17 (NUDT17), found in Bos taurus (Bovine).